The chain runs to 273 residues: NADH-ubiquinone oxidoreductase 29.9 kDa subunit, mitochondrial (273 aa).

Residues 1–8 (MRAALRLL) constitute a mitochondrion transit peptide.

It belongs to the complex I NDUFA5 subunit family. Complex I is composed of about 40 different subunits.

The protein localises to the mitochondrion inner membrane. In terms of biological role, accessory subunit of the mitochondrial membrane respiratory chain NADH dehydrogenase (Complex I), that is believed not to be involved in catalysis. Complex I functions in the transfer of electrons from NADH to the respiratory chain. The immediate electron acceptor for the enzyme is believed to be ubiquinone. The sequence is that of NADH-ubiquinone oxidoreductase 29.9 kDa subunit, mitochondrial (nuo-32) from Neurospora crassa (strain ATCC 24698 / 74-OR23-1A / CBS 708.71 / DSM 1257 / FGSC 987).